The sequence spans 114 residues: Vacuolar morphogenesis protein 10 (114 aa).

Its subcellular location is the vacuole membrane. In terms of biological role, required for vacuolar fusion. Involved in the early steps of the fusion pathway. This chain is Vacuolar morphogenesis protein 10 (VAM10), found in Saccharomyces cerevisiae (strain ATCC 204508 / S288c) (Baker's yeast).